The chain runs to 645 residues: Sodium-dependent nutrient amino acid transporter 1 (645 aa).

Residues 1–48 (MELKTMPHNGANGSPQHNNNNNSNNNNNVSSDTKTDNNEKEAQKKDEG) form a disordered region. The Cytoplasmic portion of the chain corresponds to 1–51 (MELKTMPHNGANGSPQHNNNNNSNNNNNVSSDTKTDNNEKEAQKKDEGRTN). A compositionally biased stretch (low complexity) spans 18 to 32 (NNNNNSNNNNNVSSD). The span at 33–48 (TKTDNNEKEAQKKDEG) shows a compositional bias: basic and acidic residues. 3 helical membrane-spanning segments follow: residues 52-72 (WSNG…LGNV), 85-105 (GAFL…MYYL), and 138-158 (TICI…YLFV). Asn191 and Asn205 each carry an N-linked (GlcNAc...) asparagine glycan. A run of 7 helical transmembrane segments spans residues 234–254 (IPDW…FLVI), 264–284 (AAYF…GRAV), 313–333 (AVVQ…MFAS), 347–367 (IVTT…FAIL), 407–427 (LFSV…IVAL), 454–474 (CGFL…LTLV), and 480–500 (TYVV…IYGL). Residue Asn514 is glycosylated (N-linked (GlcNAc...) asparagine). Helical transmembrane passes span 522-542 (CWSF…MATI) and 559-579 (AGWL…WWYI).

The protein belongs to the sodium:neurotransmitter symporter (SNF) (TC 2.A.22) family.

The protein localises to the membrane. In terms of biological role, unusual broad substrate spectrum amino acid:sodium cotransporter that promotes absorption of the D isomers of essential amino acids. Neutral amino acids are the preferred substrates, especially methionine and phenylalanine. The polypeptide is Sodium-dependent nutrient amino acid transporter 1 (Drosophila mojavensis (Fruit fly)).